Reading from the N-terminus, the 103-residue chain is RNA-binding protein YlxQ (103 aa).

It belongs to the eukaryotic ribosomal protein eL8 family.

Functionally, RNA-binding protein that recognizes the K-turn motif present in ribosomal RNA, but also in box C/D and box C'/D' sRNAs. This is RNA-binding protein YlxQ from Enterococcus faecium (Streptococcus faecium).